Consider the following 701-residue polypeptide: Polyribonucleotide nucleotidyltransferase (701 aa).

Residues Asp487 and Asp493 each coordinate Mg(2+). In terms of domain architecture, KH spans 554–613 (PTMIAMKIDTDKIRDVIGKGGATIRAICEETKASIDIEDDGSIKIFGETKEAAEAARQRV). In terms of domain architecture, S1 motif spans 623 to 691 (GKIYVGKVER…NRGRIKLSIK (69 aa)).

Belongs to the polyribonucleotide nucleotidyltransferase family. In terms of assembly, component of the RNA degradosome, which is a multiprotein complex involved in RNA processing and mRNA degradation. Mg(2+) serves as cofactor.

Its subcellular location is the cytoplasm. The enzyme catalyses RNA(n+1) + phosphate = RNA(n) + a ribonucleoside 5'-diphosphate. Functionally, involved in mRNA degradation. Catalyzes the phosphorolysis of single-stranded polyribonucleotides processively in the 3'- to 5'-direction. This Pseudomonas fluorescens (strain SBW25) protein is Polyribonucleotide nucleotidyltransferase.